A 246-amino-acid chain; its full sequence is Orotidine 5'-phosphate decarboxylase (246 aa).

Substrate contacts are provided by residues Asp18, Lys39, 66 to 75, Thr130, Arg192, Gln201, Gly221, and Arg222; that span reads DLKFHDIPAT. Lys68 (proton donor) is an active-site residue.

Belongs to the OMP decarboxylase family. Type 1 subfamily. Homodimer.

It carries out the reaction orotidine 5'-phosphate + H(+) = UMP + CO2. The protein operates within pyrimidine metabolism; UMP biosynthesis via de novo pathway; UMP from orotate: step 2/2. Functionally, catalyzes the decarboxylation of orotidine 5'-monophosphate (OMP) to uridine 5'-monophosphate (UMP). This is Orotidine 5'-phosphate decarboxylase from Parasynechococcus marenigrum (strain WH8102).